Consider the following 136-residue polypeptide: Protein YebF (136 aa).

An N-terminal signal peptide occupies residues 1-23 (MKKTGLALVLATILLGMMGSVHA). The region spanning 30–117 (KVPACIGLNQ…KSGTMTYTGL (88 aa)) is the YebF/Cmi domain. A disulfide bridge connects residues Cys-34 and Cys-107. Residues 117–136 (LNAQTRPDPQIGLNSQAGPK) form a disordered region.

Belongs to the YebF family.

It is found in the secreted. This chain is Protein YebF, found in Yersinia pseudotuberculosis serotype O:1b (strain IP 31758).